Here is a 365-residue protein sequence, read N- to C-terminus: Peptide chain release factor 2 (365 aa).

Q252 carries the post-translational modification N5-methylglutamine.

It belongs to the prokaryotic/mitochondrial release factor family. In terms of processing, methylated by PrmC. Methylation increases the termination efficiency of RF2.

The protein resides in the cytoplasm. In terms of biological role, peptide chain release factor 2 directs the termination of translation in response to the peptide chain termination codons UGA and UAA. The chain is Peptide chain release factor 2 from Klebsiella pneumoniae (strain 342).